The primary structure comprises 433 residues: Zinc carboxypeptidase A 1 (433 aa).

Residues 1–28 (MVRLNSAAGSRWWAPAMAILAVALSVEA) form the signal peptide. In terms of domain architecture, Peptidase M14 spans 130-423 (DYHTLEEIHA…DSLITLLEES (294 aa)). Positions 187 and 190 each coordinate Zn(2+). A disulfide bond links cysteine 253 and cysteine 276. Histidine 312 provides a ligand contact to Zn(2+). The active-site Proton donor/acceptor is the glutamate 387.

The protein belongs to the peptidase M14 family. Requires Zn(2+) as cofactor. In terms of tissue distribution, expressed in the posterior midgut in pupae and female adults.

The protein localises to the secreted. Its function is as follows. Involved in the digestion of the blood meal. The polypeptide is Zinc carboxypeptidase A 1 (Anopheles gambiae (African malaria mosquito)).